The chain runs to 1064 residues: Fibropellin-1 (1064 aa).

Residues 1–19 (MRTWLLAVLLLSVIAVTYG) form the signal peptide. Positions 20–55 (QGECDSDPCENGSTCQEGEGSYICQCPMGYDGQNCD) constitute an EGF-like 1 domain. 4 disulfides stabilise this stretch: Cys23-Cys34, Cys28-Cys43, Cys45-Cys54, and Cys62-Cys88. The N-linked (GlcNAc...) asparagine glycan is linked to Asn30. The CUB domain occupies 62-175 (CGYNVFDANG…NRGFRITFSS (114 aa)). Asn136 carries an N-linked (GlcNAc...) asparagine glycan. Residues 176–212 (DGDDCDPNLCQNGAACTDLVNDYACTCPPGFTGRNCE) enclose the EGF-like 2; calcium-binding domain. Intrachain disulfides connect Cys180–Cys191, Cys185–Cys200, Cys202–Cys211, Cys218–Cys229, Cys223–Cys238, Cys240–Cys249, Cys256–Cys267, Cys261–Cys276, Cys278–Cys287, Cys294–Cys305, Cys299–Cys314, Cys316–Cys325, Cys332–Cys343, Cys337–Cys352, Cys354–Cys363, Cys370–Cys381, Cys375–Cys390, Cys392–Cys401, Cys408–Cys419, Cys413–Cys428, Cys430–Cys439, Cys446–Cys457, Cys451–Cys466, Cys468–Cys477, Cys484–Cys495, Cys489–Cys504, Cys506–Cys515, Cys522–Cys533, Cys527–Cys542, Cys544–Cys553, Cys560–Cys571, Cys565–Cys580, Cys582–Cys591, Cys598–Cys609, Cys603–Cys618, Cys620–Cys629, Cys636–Cys647, Cys641–Cys656, Cys658–Cys667, Cys674–Cys685, Cys679–Cys694, Cys696–Cys705, Cys712–Cys723, Cys717–Cys732, Cys734–Cys743, Cys750–Cys761, Cys755–Cys770, Cys772–Cys781, Cys788–Cys799, Cys793–Cys808, Cys810–Cys819, Cys826–Cys837, Cys831–Cys846, Cys848–Cys857, Cys864–Cys875, Cys869–Cys884, Cys886–Cys895, Cys902–Cys913, Cys907–Cys922, Cys924–Cys933, and Cys939–Cys1015. The 37-residue stretch at 214-250 (DIDECASDPCQNGGACVDGVNGYVCNCVPGFDGDECE) folds into the EGF-like 3; calcium-binding domain. The region spanning 252–288 (NINECASSPCLNGGICVDGVNMFECTCLAGFTGVRCE) is the EGF-like 4; calcium-binding domain. In terms of domain architecture, EGF-like 5; calcium-binding spans 290–326 (NIDECASAPCQNGGICIDGINGYTCSCPLGFSGDNCE). The 37-residue stretch at 328–364 (NDDECSSIPCLNGGTCVDLVNAYMCVCAPGWTGPTCA) folds into the EGF-like 6; calcium-binding domain. Residues 366–402 (NIDECASAPCQNGGVCIDGVNGYMCDCQPGYTGTHCE) enclose the EGF-like 7; calcium-binding domain. Positions 404 to 440 (DIDECARPPCQNGGDCVDGVNGYVCICAPGFDGLNCE) constitute an EGF-like 8; calcium-binding domain. The EGF-like 9; calcium-binding domain occupies 442–478 (NIDECASRPCQNGAVCVDGVNGFVCTCSAGYTGVLCE). Residues 480-516 (DINECASMPCLNGGVCTDLVNGYICTCAAGFEGTNCE) form the EGF-like 10; calcium-binding domain. The region spanning 518–554 (DTDECASFPCQNGATCTDQVNGYVCTCVPGYTGVLCE) is the EGF-like 11; calcium-binding domain. The 37-residue stretch at 556-592 (DINECASFPCLNGGTCNDQVNGYVCVCAQDTSVSTCE) folds into the EGF-like 12; calcium-binding domain. An EGF-like 13; calcium-binding domain is found at 594–630 (DRDECASAPCLNGGACMDVVNGFVCTCLPGWEGTNCE). The region spanning 632-668 (NTDECASSPCMNGGLCVDQVNSYVCFCLPGFTGIHCG) is the EGF-like 14; calcium-binding domain. Positions 670 to 706 (EIDECASSPCLNGGQCIDRVDSYECVCAAGYTAVRCQ) constitute an EGF-like 15; calcium-binding domain. In terms of domain architecture, EGF-like 16; calcium-binding spans 708–744 (NIDECASAPCQNGGVCVDGVNGYVCNCAPGYTGDNCE). In terms of domain architecture, EGF-like 17; calcium-binding spans 746–782 (EIDECASMPCLNGGACIEMVNGYTCQCVAGYTGVICE). One can recognise an EGF-like 18; calcium-binding domain in the interval 784–820 (DIDECASAPCQNGGVCTDTINGYICACVPGFTGSNCE). The 37-residue stretch at 822–858 (NIDECASDPCLNGGICVDGVNGFVCQCPPNYSGTYCE) folds into the EGF-like 19; calcium-binding domain. Asn851 carries an N-linked (GlcNAc...) asparagine glycan. An EGF-like 20 domain is found at 860–896 (SLDACRSMPCQNGATCVNVGADYVCECVPGYAGQNCE). In terms of domain architecture, EGF-like 21; calcium-binding spans 898–934 (DINECASLPCQNGGLCIDGIAGYTCQCRLGYIGVNCE). Positions 937–1056 (GFCDLEGMWY…GQDKWTRYEQ (120 aa)) constitute an Avidin-like domain.

As to quaternary structure, homotetramer.

Its subcellular location is the secreted. It is found in the extracellular space. The protein resides in the cytoplasmic vesicle. The protein localises to the extracellular matrix. It localises to the hyaline layer. Its subcellular location is the apical lamina. Forms the apical lamina, a component of the extracellular matrix. This Strongylocentrotus purpuratus (Purple sea urchin) protein is Fibropellin-1 (EGF1).